The chain runs to 322 residues: Sideroflexin-1 (322 aa).

Serine 2 carries the post-translational modification N-acetylserine. Residues 2–102 are Mitochondrial matrix-facing; sequence SGEVPPNINI…MSAQVPMNMT (101 aa). A helical transmembrane segment spans residues 103 to 120; the sequence is ITGCMMTFYRTTPAVLFW. At 121 to 146 the chain is on the mitochondrial intermembrane side; the sequence is QWINQSFNAVVNYTNRSGDAPLTVNE. The chain crosses the membrane as a helical span at residues 147 to 167; that stretch reads LGTAYVSATTGAVATALGLNA. The Mitochondrial matrix portion of the chain corresponds to 168–174; it reads LTKHVSP. The helical transmembrane segment at 175–195 threads the bilayer; that stretch reads LIGRFVPFAAVAAANCINIPL. Residues 196-228 lie on the Mitochondrial intermembrane side of the membrane; it reads MRQRELKVGIPVTDENGTRLGESTNAAKQAITQ. Residues 229 to 249 form a helical membrane-spanning segment; the sequence is VVISRILMAAPGMAIPPFIMN. Residues 250 to 266 are Mitochondrial matrix-facing; the sequence is TLEKKAFLKRFPWMSAP. The helical transmembrane segment at 267 to 287 threads the bilayer; the sequence is IQVTLVGFCLVFATPLCCALF. Residues 288–322 lie on the Mitochondrial intermembrane side of the membrane; the sequence is PQKSSMSVTSLEDDLQASIQKSHPELRRVYFNKGL.

It belongs to the sideroflexin family.

It localises to the mitochondrion inner membrane. It carries out the reaction L-serine(in) = L-serine(out). It catalyses the reaction L-alanine(in) = L-alanine(out). The enzyme catalyses L-cysteine(in) = L-cysteine(out). Its function is as follows. Amino acid transporter importing serine, an essential substrate of the mitochondrial branch of the one-carbon pathway, into mitochondria. Mitochondrial serine is then converted to glycine and formate, which exits to the cytosol where it is used to generate the charged folates that serve as one-carbon donors. May also transport other amino acids including alanine and cysteine. In Rattus norvegicus (Rat), this protein is Sideroflexin-1 (Sfxn1).